The primary structure comprises 438 residues: Serine hydroxymethyltransferase (438 aa).

Residues Leu133 and 137 to 139 (GHL) contribute to the (6S)-5,6,7,8-tetrahydrofolate site. Lys242 is modified (N6-(pyridoxal phosphate)lysine).

Belongs to the SHMT family. As to quaternary structure, homodimer. Pyridoxal 5'-phosphate serves as cofactor.

It localises to the cytoplasm. It carries out the reaction (6R)-5,10-methylene-5,6,7,8-tetrahydrofolate + glycine + H2O = (6S)-5,6,7,8-tetrahydrofolate + L-serine. It participates in one-carbon metabolism; tetrahydrofolate interconversion. The protein operates within amino-acid biosynthesis; glycine biosynthesis; glycine from L-serine: step 1/1. Its function is as follows. Catalyzes the reversible interconversion of serine and glycine with tetrahydrofolate (THF) serving as the one-carbon carrier. This reaction serves as the major source of one-carbon groups required for the biosynthesis of purines, thymidylate, methionine, and other important biomolecules. Also exhibits THF-independent aldolase activity toward beta-hydroxyamino acids, producing glycine and aldehydes, via a retro-aldol mechanism. The sequence is that of Serine hydroxymethyltransferase from Brucella abortus (strain S19).